The primary structure comprises 528 residues: Phosphoenolpyruvate carboxykinase (ATP) (528 aa).

Residues arginine 56, tyrosine 192, and lysine 198 each coordinate substrate. ATP is bound by residues lysine 198, histidine 217, and 233-241; that span reads GLSGTGKTT. The Mn(2+) site is built by lysine 198 and histidine 217. A Mn(2+)-binding site is contributed by aspartate 254. ATP contacts are provided by glutamate 282, arginine 319, and threonine 444. Arginine 319 contacts substrate.

The protein belongs to the phosphoenolpyruvate carboxykinase (ATP) family. The cofactor is Mn(2+).

The protein localises to the cytoplasm. It carries out the reaction oxaloacetate + ATP = phosphoenolpyruvate + ADP + CO2. It participates in carbohydrate biosynthesis; gluconeogenesis. Functionally, involved in the gluconeogenesis. Catalyzes the conversion of oxaloacetate (OAA) to phosphoenolpyruvate (PEP) through direct phosphoryl transfer between the nucleoside triphosphate and OAA. The sequence is that of Phosphoenolpyruvate carboxykinase (ATP) from Bacillus cereus (strain 03BB102).